Consider the following 874-residue polypeptide: Alanine--tRNA ligase (874 aa).

4 residues coordinate Zn(2+): His564, His568, Cys665, and His669.

The protein belongs to the class-II aminoacyl-tRNA synthetase family. It depends on Zn(2+) as a cofactor.

The protein localises to the cytoplasm. It catalyses the reaction tRNA(Ala) + L-alanine + ATP = L-alanyl-tRNA(Ala) + AMP + diphosphate. Catalyzes the attachment of alanine to tRNA(Ala) in a two-step reaction: alanine is first activated by ATP to form Ala-AMP and then transferred to the acceptor end of tRNA(Ala). Also edits incorrectly charged Ser-tRNA(Ala) and Gly-tRNA(Ala) via its editing domain. This chain is Alanine--tRNA ligase, found in Burkholderia vietnamiensis (strain G4 / LMG 22486) (Burkholderia cepacia (strain R1808)).